The primary structure comprises 184 residues: Ribosome maturation factor RimM (184 aa).

The 81-residue stretch at 104–184 (SEDEFYWREL…RIEVDWDPGF (81 aa)) folds into the PRC barrel domain.

Belongs to the RimM family. In terms of assembly, binds ribosomal protein uS19.

The protein resides in the cytoplasm. In terms of biological role, an accessory protein needed during the final step in the assembly of 30S ribosomal subunit, possibly for assembly of the head region. Essential for efficient processing of 16S rRNA. May be needed both before and after RbfA during the maturation of 16S rRNA. It has affinity for free ribosomal 30S subunits but not for 70S ribosomes. The chain is Ribosome maturation factor RimM from Vibrio atlanticus (strain LGP32) (Vibrio splendidus (strain Mel32)).